A 170-amino-acid polypeptide reads, in one-letter code: Large ribosomal subunit protein uL5 (170 aa).

This sequence belongs to the universal ribosomal protein uL5 family. In terms of assembly, part of the 50S ribosomal subunit; contacts the 5S rRNA and probably tRNA. Forms a bridge to the 30S subunit in the 70S ribosome.

Functionally, this is one of the proteins that bind and probably mediate the attachment of the 5S RNA into the large ribosomal subunit, where it forms part of the central protuberance. In the 70S ribosome it contacts protein S13 of the 30S subunit (bridge B1b), connecting the 2 subunits; this bridge is implicated in subunit movement. May contact the P site tRNA; the 5S rRNA and some of its associated proteins might help stabilize positioning of ribosome-bound tRNAs. The chain is Large ribosomal subunit protein uL5 from Thermoplasma volcanium (strain ATCC 51530 / DSM 4299 / JCM 9571 / NBRC 15438 / GSS1).